The primary structure comprises 702 residues: Ribosomal RNA large subunit methyltransferase K/L (702 aa).

In terms of domain architecture, THUMP spans 43 to 154; that stretch reads LVYQSLMWSR…KETASIALDL (112 aa).

Belongs to the methyltransferase superfamily. RlmKL family.

The protein localises to the cytoplasm. The catalysed reaction is guanosine(2445) in 23S rRNA + S-adenosyl-L-methionine = N(2)-methylguanosine(2445) in 23S rRNA + S-adenosyl-L-homocysteine + H(+). It catalyses the reaction guanosine(2069) in 23S rRNA + S-adenosyl-L-methionine = N(2)-methylguanosine(2069) in 23S rRNA + S-adenosyl-L-homocysteine + H(+). Specifically methylates the guanine in position 2445 (m2G2445) and the guanine in position 2069 (m7G2069) of 23S rRNA. The protein is Ribosomal RNA large subunit methyltransferase K/L of Shigella sonnei (strain Ss046).